The chain runs to 304 residues: Tyrosine recombinase XerC (304 aa).

The Core-binding (CB) domain maps to 2–88 (ANVKNFLTLF…ALRSFYKFLL (87 aa)). Residues 109–294 (RIPKFLYEKE…SKDMLRKTYM (186 aa)) enclose the Tyr recombinase domain. Residues Arg-149, Lys-173, His-246, Arg-249, and His-272 contribute to the active site. The active-site O-(3'-phospho-DNA)-tyrosine intermediate is Tyr-281.

It belongs to the 'phage' integrase family. XerC subfamily. As to quaternary structure, forms a cyclic heterotetrameric complex composed of two molecules of XerC and two molecules of XerD.

It localises to the cytoplasm. Its function is as follows. Site-specific tyrosine recombinase, which acts by catalyzing the cutting and rejoining of the recombining DNA molecules. The XerC-XerD complex is essential to convert dimers of the bacterial chromosome into monomers to permit their segregation at cell division. It also contributes to the segregational stability of plasmids. In Bacillus licheniformis (strain ATCC 14580 / DSM 13 / JCM 2505 / CCUG 7422 / NBRC 12200 / NCIMB 9375 / NCTC 10341 / NRRL NRS-1264 / Gibson 46), this protein is Tyrosine recombinase XerC.